Reading from the N-terminus, the 145-residue chain is Flagellar assembly factor FliW (145 aa).

It belongs to the FliW family. Interacts with translational regulator CsrA and flagellin(s).

It is found in the cytoplasm. Its function is as follows. Acts as an anti-CsrA protein, binds CsrA and prevents it from repressing translation of its target genes, one of which is flagellin. Binds to flagellin and participates in the assembly of the flagellum. The chain is Flagellar assembly factor FliW from Clostridium tetani (strain Massachusetts / E88).